A 312-amino-acid chain; its full sequence is Ribosomal RNA small subunit methyltransferase H (312 aa).

Residues 32 to 34 (AGH), Asp51, Phe78, Asp99, and Gln106 contribute to the S-adenosyl-L-methionine site.

It belongs to the methyltransferase superfamily. RsmH family.

The protein resides in the cytoplasm. The enzyme catalyses cytidine(1402) in 16S rRNA + S-adenosyl-L-methionine = N(4)-methylcytidine(1402) in 16S rRNA + S-adenosyl-L-homocysteine + H(+). In terms of biological role, specifically methylates the N4 position of cytidine in position 1402 (C1402) of 16S rRNA. The chain is Ribosomal RNA small subunit methyltransferase H from Exiguobacterium sibiricum (strain DSM 17290 / CCUG 55495 / CIP 109462 / JCM 13490 / 255-15).